The chain runs to 170 residues: Nicotinamide-nucleotide adenylyltransferase (170 aa).

This sequence belongs to the archaeal NMN adenylyltransferase family.

The protein resides in the cytoplasm. It catalyses the reaction beta-nicotinamide D-ribonucleotide + ATP + H(+) = diphosphate + NAD(+). The protein operates within cofactor biosynthesis; NAD(+) biosynthesis; NAD(+) from nicotinamide D-ribonucleotide: step 1/1. This chain is Nicotinamide-nucleotide adenylyltransferase, found in Methanothrix thermoacetophila (strain DSM 6194 / JCM 14653 / NBRC 101360 / PT) (Methanosaeta thermophila).